A 672-amino-acid polypeptide reads, in one-letter code: DNA ligase (672 aa).

NAD(+)-binding positions include 35-39 (DAQYD), 84-85 (SL), and Glu115. The N6-AMP-lysine intermediate role is filled by Lys117. The NAD(+) site is built by Arg138, Glu178, Lys294, and Lys318. Zn(2+) contacts are provided by Cys412, Cys415, Cys430, and Cys435. One can recognise a BRCT domain in the interval 592–672 (ATGGPFVGKS…AFLQMLQTNA (81 aa)).

This sequence belongs to the NAD-dependent DNA ligase family. LigA subfamily. It depends on Mg(2+) as a cofactor. Requires Mn(2+) as cofactor.

It carries out the reaction NAD(+) + (deoxyribonucleotide)n-3'-hydroxyl + 5'-phospho-(deoxyribonucleotide)m = (deoxyribonucleotide)n+m + AMP + beta-nicotinamide D-nucleotide.. Its function is as follows. DNA ligase that catalyzes the formation of phosphodiester linkages between 5'-phosphoryl and 3'-hydroxyl groups in double-stranded DNA using NAD as a coenzyme and as the energy source for the reaction. It is essential for DNA replication and repair of damaged DNA. This chain is DNA ligase, found in Myxococcus xanthus (strain DK1622).